Consider the following 599-residue polypeptide: Endoribonuclease ZC3H12A (599 aa).

The interval 1–40 (MSGPCGEKPVLEASPTMSLWEFEDSHSRQGTPRPGQELAA) is disordered. The interval 42–87 (EASALELQMKVDFFRKLGYSSTEIHSVLQKLGVQADTNTVLGELVK) is ubiquitin association domain. Residues 81-150 (VLGELVKHGT…DGSNVAMSHG (70 aa)) are necessary for interaction with TANK. The segment at 90–133 (TATERERQTSPDPCPQLPLVPRGGGTPKAPNLEPPLPEEEKEGS) is disordered. S99 bears the Phosphoserine mark. The segment at 112 to 297 (GGGTPKAPNL…LDNFLRKKPL (186 aa)) is RNase. The 156-residue stretch at 135-290 (LRPVVIDGSN…LGRHGPSLDN (156 aa)) folds into the RNase NYN domain. An RNA binding region spans residues 214 to 220 (RRVGGKR). Residue D226 coordinates Mg(2+). The C3H1-type zinc-finger motif lies at 301–324 (HRKQPCPYGRKCTYGIKCRFFHPE). Residues 301–457 (HRKQPCPYGR…SELWGVRGGG (157 aa)) form a necessary for interaction with ZC3H12D region. Residues 343–420 (LSPPRAPSKD…SGSSFGPTDW (78 aa)) form a disordered region. At S344 the chain carries Phosphoserine. Low complexity predominate over residues 358–375 (PSPSSQSSSLLTESEQCS). The span at 386-399 (SPGSRQEGLTQTYA) shows a compositional bias: polar residues. Residues S438 and S442 each carry the phosphoserine modification. Residues 522–546 (PPPTSVLQEPPVQSPGAGRSPWGRA) form a disordered region.

It belongs to the ZC3H12 family. Oligomer. Found in a deubiquitination complex with TANK, USP10 and ZC3H12A; this complex inhibits genotoxic stress- or interleukin-1-beta-mediated NF-kappaB activation by promoting IKBKG or TRAF6 deubiquitination. Interacts with IKBKG; this interaction increases in response to DNA damage. Interacts with TANK; this interaction increases in response to DNA damage and serves as a bridge to anchor both TANK and USP10 into a deubiquitinating complex. Interacts with TRAF6; this interaction increases in response to DNA damage and is stimulated by TANK. Interacts with USP10; this interaction increases in response to DNA damage and serves as a bridge to anchor both TANK and USP10 into a deubiquitinating complex. Interacts with ZC3H12D. Interacts with TNRC6A. Interacts with IKBKB/IKKB. Interacts with IKBKB/IKKB. Interacts with BTRC; the interaction occurs when ZC3H12A is phosphorylated in a IKBKB/IKKB-dependent manner. Interacts with IRAK1; this interaction increases the interaction between ZC3H12A and IKBKB/IKKB. Interacts with UPF1; this interaction occurs in a mRNA translationally active- and termination-dependent manner and is essential for ZC3H12A-mediated degradation of target mRNAs. Associates with ribosomes. Interacts with ubiquitin. As to quaternary structure, (Microbial infection) Oligomerization is necessary for antiviral activity. Mg(2+) is required as a cofactor. Post-translationally, phosphorylated by IRAK1; phosphorylation is necessary for subsequent phosphorylation by the I-kappa-B-kinase (IKK) complex. Phosphorylated by I-kappa-B-kinase (IKK) subunits IKBKB/IKKB and CHUK/IKKA at Ser-438 and Ser-442; these phosphorylations promote ubiquitin proteasome-mediated degradation of ZC3H12A and hence facilitates rapid and robust production of IL-6 mRNA in response to toll-like receptor (TLR) or IL-1 receptor stimuli. (Microbial infection) Rapidly degraded in activated T-cells in response to phorbol 13-acetate 12-myristate (PMA) during HIV-1 viral infection. In terms of processing, ubiquitinated; ubiquitination is induced in response to interleukin IL1 receptor stimuli in a IKBKB/IKKB and IRAK1-dependent manner, leading to proteasome-mediated degradation. Post-translationally, proteolytically cleaved between Arg-111 and Arg-214 by MALT1 in activated T-cells; cleavage at Arg-111 is critical for promoting ZC3H12A degradation in response to T-cell receptor (TCR) stimulation, and hence is necessary for prolonging the stability of a set of mRNAs controlling T-cell activation and Th17 cell differentiation. As to expression, expressed in heart, placenta, spleen, kidney, liver and lung. Expressed in leukocytes. Expressed in monocyte.

Its subcellular location is the nucleus. It localises to the cytoplasm. The protein localises to the P-body. It is found in the rough endoplasmic reticulum membrane. The protein resides in the cytoplasmic granule. Endoribonuclease involved in various biological functions such as cellular inflammatory response and immune homeostasis, glial differentiation of neuroprogenitor cells, cell death of cardiomyocytes, adipogenesis and angiogenesis. Functions as an endoribonuclease involved in mRNA decay. Modulates the inflammatory response by promoting the degradation of a set of translationally active cytokine-induced inflammation-related mRNAs, such as IL6 and IL12B, during the early phase of inflammation. Prevents aberrant T-cell-mediated immune reaction by degradation of multiple mRNAs controlling T-cell activation, such as those encoding cytokines (IL6 and IL2), cell surface receptors (ICOS, TNFRSF4 and TNFR2) and transcription factor (REL). Inhibits cooperatively with ZC3H12A the differentiation of helper T cells Th17 in lungs. They repress target mRNA encoding the Th17 cell-promoting factors IL6, ICOS, REL, IRF4, NFKBID and NFKBIZ. The cooperation requires RNA-binding by RC3H1 and the nuclease activity of ZC3H12A. Together with RC3H1, destabilizes TNFRSF4/OX40 mRNA by binding to the conserved stem loop structure in its 3'UTR. Self regulates by destabilizing its own mRNA. Cleaves mRNA harboring a stem-loop (SL), often located in their 3'-UTRs, during the early phase of inflammation in a helicase UPF1-dependent manner. Plays a role in the inhibition of microRNAs (miRNAs) biogenesis. Cleaves the terminal loop of a set of precursor miRNAs (pre-miRNAs) important for the regulation of the inflammatory response leading to their degradation, and thus preventing the biosynthesis of mature miRNAs. Also plays a role in promoting angiogenesis in response to inflammatory cytokines by inhibiting the production of antiangiogenic microRNAs via its anti-dicer RNase activity. Affects the overall ubiquitination of cellular proteins. Positively regulates deubiquitinase activity promoting the cleavage at 'Lys-48'- and 'Lys-63'-linked polyubiquitin chains on TNF receptor-associated factors (TRAFs), preventing JNK and NF-kappa-B signaling pathway activation, and hence negatively regulating macrophage-mediated inflammatory response and immune homeostasis. Also induces deubiquitination of the transcription factor HIF1A, probably leading to its stabilization and nuclear import, thereby positively regulating the expression of proangiogenic HIF1A-targeted genes. Involved in a TANK-dependent negative feedback response to attenuate NF-kappaB activation through the deubiquitination of IKBKG or TRAF6 in response to interleukin-1-beta (IL1B) stimulation or upon DNA damage. Prevents stress granule (SGs) formation and promotes macrophage apoptosis under stress conditions, including arsenite-induced oxidative stress, heat shock and energy deprivation. Plays a role in the regulation of macrophage polarization; promotes IL4-induced polarization of macrophages M1 into anti-inflammatory M2 state. May also act as a transcription factor that regulates the expression of multiple genes involved in inflammatory response, angiogenesis, adipogenesis and apoptosis. Functions as a positive regulator of glial differentiation of neuroprogenitor cells through an amyloid precursor protein (APP)-dependent signaling pathway. Attenuates septic myocardial contractile dysfunction in response to lipopolysaccharide (LPS) by reducing I-kappa-B-kinase (IKK)-mediated NF-kappa-B activation, and hence myocardial pro-inflammatory cytokine production. In terms of biological role, (Microbial infection) Binds to Japanese encephalitis virus (JEV) and Dengue virus (DEN) RNAs. Functionally, (Microbial infection) Exhibits antiviral activity against HIV-1 in lymphocytes by decreasing the abundance of HIV-1 viral RNA species. The chain is Endoribonuclease ZC3H12A from Homo sapiens (Human).